Consider the following 324-residue polypeptide: Brorin (324 aa).

The N-terminal stretch at 1 to 27 (MPSSSAMAVGALSSSLLVTCCLMVALC) is a signal peptide. The disordered stretch occupies residues 37–126 (AQAPEQPGQE…TPQGEPPAAA (90 aa)). Composition is skewed to basic and acidic residues over residues 44 to 56 (GQEKREHASRDSP) and 64 to 78 (RASRDEGSSARDWKS). A compositionally biased stretch (low complexity) spans 92–107 (KQKQAWAAQGGSAKAA). Residues 114 to 116 (RGD) carry the Mediates cell adhesion motif. 2 consecutive VWFC domains span residues 152 to 211 (KGCV…PQCK) and 215 to 273 (NYCE…PICK).

Peripherally associated with AMPAR complex. AMPAR complex consists of an inner core made of 4 pore-forming GluA/GRIA proteins (GRIA1, GRIA2, GRIA3 and GRIA4) and 4 major auxiliary subunits arranged in a twofold symmetry. One of the two pairs of distinct binding sites is occupied either by CNIH2, CNIH3 or CACNG2, CACNG3. The other harbors CACNG2, CACNG3, CACNG4, CACNG8 or GSG1L. This inner core of AMPAR complex is complemented by outer core constituents binding directly to the GluA/GRIA proteins at sites distinct from the interaction sites of the inner core constituents. Outer core constituents include at least PRRT1, PRRT2, CKAMP44/SHISA9, FRRS1L and NRN1. The proteins of the inner and outer core serve as a platform for other, more peripherally associated AMPAR constituents, including VWC2. Alone or in combination, these auxiliary subunits control the gating and pharmacology of the AMPAR complex and profoundly impact their biogenesis and protein processing. Predominantly expressed in the brain (at protein level). It is expressed in the neurons but not the glial cells.

Its subcellular location is the secreted. It localises to the extracellular space. The protein resides in the extracellular matrix. It is found in the basement membrane. The protein localises to the synapse. Functionally, BMP antagonist which may play a role in neural development. Promotes cell adhesion. The sequence is that of Brorin (Vwc2) from Mus musculus (Mouse).